Consider the following 475-residue polypeptide: Exodeoxyribonuclease I (475 aa).

Residues 13-192 (FHDYETFGTH…AMADVYATIA (180 aa)) form the Exonuclease domain. Mg(2+) contacts are provided by aspartate 15 and glutamate 17. Residues glutamate 17 and arginine 165 each contribute to the substrate site. Aspartate 186 is a binding site for Mg(2+). The ExoI SH3-like domain maps to 202-355 (PRLFDYLFTH…KVVAIFAEAE (154 aa)). An ExoI C-terminal domain is found at 358 to 475 (TPSDNVDAQL…ALWQYAEEIV (118 aa)).

As to quaternary structure, monomer. Interacts with ssb (via C-terminus); this interaction stimulates the exonuclease activity by recruiting the enzyme to its substrate. Mg(2+) serves as cofactor.

The catalysed reaction is Exonucleolytic cleavage in the 3'- to 5'-direction to yield nucleoside 5'-phosphates.. Inhibited by 10 mM EDTA. In terms of biological role, degrades single-stranded DNA (ssDNA) in a highly processive manner. Also functions as a DNA deoxyribophosphodiesterase that releases deoxyribose-phosphate moieties following the cleavage of DNA at an apurinic/apyrimidinic (AP) site by either an AP endonuclease or AP lyase. The protein is Exodeoxyribonuclease I (sbcB) of Escherichia coli (strain K12).